A 261-amino-acid chain; its full sequence is Phosphatidylglycerol--prolipoprotein diacylglyceryl transferase (261 aa).

7 helical membrane passes run 19–39, 56–76, 92–112, 126–146, 173–193, 199–219, and 227–247; these read VHWY…LALY, LIFY…MLFY, WRGG…TWIF, FVVP…FING, QLYE…WFSA, FAVS…AEFF, and GFVA…MIII. A 1,2-diacyl-sn-glycero-3-phospho-(1'-sn-glycerol) is bound at residue Arg-139.

This sequence belongs to the Lgt family.

It localises to the cell inner membrane. It catalyses the reaction L-cysteinyl-[prolipoprotein] + a 1,2-diacyl-sn-glycero-3-phospho-(1'-sn-glycerol) = an S-1,2-diacyl-sn-glyceryl-L-cysteinyl-[prolipoprotein] + sn-glycerol 1-phosphate + H(+). The protein operates within protein modification; lipoprotein biosynthesis (diacylglyceryl transfer). Its function is as follows. Catalyzes the transfer of the diacylglyceryl group from phosphatidylglycerol to the sulfhydryl group of the N-terminal cysteine of a prolipoprotein, the first step in the formation of mature lipoproteins. The protein is Phosphatidylglycerol--prolipoprotein diacylglyceryl transferase of Coxiella burnetii (strain CbuK_Q154) (Coxiella burnetii (strain Q154)).